A 735-amino-acid polypeptide reads, in one-letter code: Two pore calcium channel protein 1B (735 aa).

Residues 1-76 (MEEYLLPGES…ELYFMFTRFD (76 aa)) are Cytoplasmic-facing. The chain crosses the membrane as a helical span at residues 77–97 (FLWSLNYLALVVLNFFEKPLW). Residues 98–125 (CSKHLAESCNNRDYYYLGELPFLTGAES) are Extracellular-facing. The helical transmembrane segment at 126–146 (LIFEGVTLLLLIIHILFPISY) threads the bilayer. The Cytoplasmic segment spans residues 147 to 161 (EGFNLYWRSLLNRLK). Residues 162–182 (VILLLILVADIVVYILLPADF) form a helical membrane-spanning segment. Tyr183 is a topological domain (extracellular). A helical; Voltage-sensor transmembrane segment spans residues 184–202 (YLPFRIAPYLRVVFFILNI). Residues 203–208 (RELRDS) are Cytoplasmic-facing. Residues 209–229 (FFILAGMLGTYLNVVALSALF) traverse the membrane as a helical segment. The Extracellular segment spans residues 230–248 (LLFSSWLAYVFFEDTRQGK). Positions 249 to 263 (TTFTSYGTTLYQMFV) form an intramembrane region, pore-forming. Over 264–286 (LFTTSNNPDVWIPAYKDSRWYCL) the chain is Extracellular. Residues 287–307 (FFVLYVLLGVYFVTNLILAVV) traverse the membrane as a helical segment. Residues 308-431 (YDSFKSELVK…ASEKLRGFIR (124 aa)) lie on the Cytoplasmic side of the membrane. EF-hand domains are found at residues 325–360 (LRLRTLKKAFSLIDEANNGLLNEKQCTLLFEELNKY) and 366–401 (ISGDDFKSIFNELDDTGDFKINLEEFADLCSAIGLR). The helical transmembrane segment at 432–452 (GATFEYIIVFVLLVNLVAVII) threads the bilayer. The Extracellular portion of the chain corresponds to 453 to 470 (ETTLDIQNNSGQTFWQKV). Residue Asn460 is glycosylated (N-linked (GlcNAc...) asparagine). The helical transmembrane segment at 471 to 491 (EFTFGWLYVIEMALKVYTYGF) threads the bilayer. At 492–501 (ENYWRDGQNR) the chain is on the cytoplasmic side. The helical transmembrane segment at 502-522 (FDFIVTWVIVIGETTTFVAPD) threads the bilayer. At 523-531 (DLTFLSNGE) the chain is on the extracellular side. Residues 532–549 (WIRYLLIARMLRLIRLLM) form a helical; Voltage-sensor membrane-spanning segment. Topologically, residues 550 to 560 (HVERYRAFVAT) are cytoplasmic. A helical transmembrane segment spans residues 561–581 (FLTLIPSLMPYLGTIFCILCF). Residues 582 to 618 (YCSLGLQIFGGIVNTGNPNLAQTDLAGNDYLLFNFND) are Extracellular-facing. Positions 619-633 (YPNGMVTLFNILVMG) form an intramembrane region, pore-forming. Residues 634-654 (NWQVWMQSYKELTGTSWTYAY) are Extracellular-facing. Residues 655–675 (FVSFYLISVLWLLNLIVAFVL) traverse the membrane as a helical segment. Residues 676–735 (EAFQAEMDLEASARCVDGDDKEAKRERRRNVGTKTRSQRVDFLLHHMLRSELTECSNDNP) lie on the Cytoplasmic side of the membrane.

Belongs to the calcium channel alpha-1 subunit (TC 1.A.1.11) family. Two pore calcium channel subfamily. As to quaternary structure, homodimer.

The protein resides in the membrane. Inhibited by Al(3+), La(3+) and Gd(3+). Up-regulated by H(2)O(2), cryptogein, salicylic acid (SA) and cold shock. In terms of biological role, functions as a voltage-gated inward-rectifying Ca(2+) channel (VDCC) across the plasma membrane that mediates sucrose-induced Ca(2+) influx in autotrophically grown leaf cells. Acts as the major ROS-responsive Ca(2+) channel and is the possible target of Al-dependent inhibition. Plays a regulatory role in defense responses. The sequence is that of Two pore calcium channel protein 1B (TPC1B) from Nicotiana tabacum (Common tobacco).